A 184-amino-acid polypeptide reads, in one-letter code: ATP synthase subunit b, chloroplastic (184 aa).

The helical transmembrane segment at 27-49 threads the bilayer; that stretch reads FATNPINLSVVLGVLIFFGKGVL.

Belongs to the ATPase B chain family. F-type ATPases have 2 components, F(1) - the catalytic core - and F(0) - the membrane proton channel. F(1) has five subunits: alpha(3), beta(3), gamma(1), delta(1), epsilon(1). F(0) has four main subunits: a(1), b(1), b'(1) and c(10-14). The alpha and beta chains form an alternating ring which encloses part of the gamma chain. F(1) is attached to F(0) by a central stalk formed by the gamma and epsilon chains, while a peripheral stalk is formed by the delta, b and b' chains.

Its subcellular location is the plastid. It is found in the chloroplast thylakoid membrane. F(1)F(0) ATP synthase produces ATP from ADP in the presence of a proton or sodium gradient. F-type ATPases consist of two structural domains, F(1) containing the extramembraneous catalytic core and F(0) containing the membrane proton channel, linked together by a central stalk and a peripheral stalk. During catalysis, ATP synthesis in the catalytic domain of F(1) is coupled via a rotary mechanism of the central stalk subunits to proton translocation. Functionally, component of the F(0) channel, it forms part of the peripheral stalk, linking F(1) to F(0). This Amborella trichopoda protein is ATP synthase subunit b, chloroplastic.